A 414-amino-acid polypeptide reads, in one-letter code: MIDLRALEKDFDTIATRLQTKGVEEKVLAELKELFEEYKKEKTILQELQTKQNSLSKMFGQYKREGKDINELKNELEINKGKIAAHQEVVRDLEEKLKNIALTIPNPPDPDVPVGENEEDNVVLKTVLEPKGFDFEPKEHWELGEKLGWIDFERGVKLAKSRFSVLKKEAARLERALINFMLDHNKEYGFEEVCVPFMANSATLLGTGQLPKFEEDLFKICDEDLYMIPTAEVPLTNLYRDEIIKDLEDPIKLTAYTPCFRKEAGSGGRDVRGMIRQHQFDKVELVAITRPEESDKVFDEMVKCASSLLAKLGLPHRHVMLCTGDLGFSAAKTIDLEVWLPGQGKYREISSISNTRDFQARRAQIRFKDGKKNRLVHTLNGSSLAVGRTLIAIMENYQQKDGSIAIPKVLESYL.

Threonine 230 to glutamate 232 lines the L-serine pocket. An ATP-binding site is contributed by arginine 261–glutamate 263. Glutamate 284 serves as a coordination point for L-serine. Position 348–351 (glutamate 348–serine 351) interacts with ATP. Serine 382 is a binding site for L-serine.

It belongs to the class-II aminoacyl-tRNA synthetase family. Type-1 seryl-tRNA synthetase subfamily. In terms of assembly, homodimer. The tRNA molecule binds across the dimer.

It is found in the cytoplasm. The enzyme catalyses tRNA(Ser) + L-serine + ATP = L-seryl-tRNA(Ser) + AMP + diphosphate + H(+). It carries out the reaction tRNA(Sec) + L-serine + ATP = L-seryl-tRNA(Sec) + AMP + diphosphate + H(+). Its pathway is aminoacyl-tRNA biosynthesis; selenocysteinyl-tRNA(Sec) biosynthesis; L-seryl-tRNA(Sec) from L-serine and tRNA(Sec): step 1/1. In terms of biological role, catalyzes the attachment of serine to tRNA(Ser). Is also able to aminoacylate tRNA(Sec) with serine, to form the misacylated tRNA L-seryl-tRNA(Sec), which will be further converted into selenocysteinyl-tRNA(Sec). This Nitratiruptor sp. (strain SB155-2) protein is Serine--tRNA ligase.